The sequence spans 580 residues: Dihydroxy-acid dehydratase (580 aa).

Residues 1-31 (MPSGSSESPADALRASDSTPDIKPRSRDVTD) form a disordered region. Over residues 20-31 (PDIKPRSRDVTD) the composition is skewed to basic and acidic residues. C69 is a binding site for [2Fe-2S] cluster. A Mg(2+)-binding site is contributed by D101. C142 provides a ligand contact to [2Fe-2S] cluster. 2 residues coordinate Mg(2+): D143 and K144. K144 carries the N6-carboxylysine modification. A [2Fe-2S] cluster-binding site is contributed by C219. Residue E470 coordinates Mg(2+). Catalysis depends on S496, which acts as the Proton acceptor.

It belongs to the IlvD/Edd family. Homodimer. [2Fe-2S] cluster serves as cofactor. Requires Mg(2+) as cofactor.

The catalysed reaction is (2R)-2,3-dihydroxy-3-methylbutanoate = 3-methyl-2-oxobutanoate + H2O. The enzyme catalyses (2R,3R)-2,3-dihydroxy-3-methylpentanoate = (S)-3-methyl-2-oxopentanoate + H2O. It functions in the pathway amino-acid biosynthesis; L-isoleucine biosynthesis; L-isoleucine from 2-oxobutanoate: step 3/4. Its pathway is amino-acid biosynthesis; L-valine biosynthesis; L-valine from pyruvate: step 3/4. In terms of biological role, functions in the biosynthesis of branched-chain amino acids. Catalyzes the dehydration of (2R,3R)-2,3-dihydroxy-3-methylpentanoate (2,3-dihydroxy-3-methylvalerate) into 2-oxo-3-methylpentanoate (2-oxo-3-methylvalerate) and of (2R)-2,3-dihydroxy-3-methylbutanoate (2,3-dihydroxyisovalerate) into 2-oxo-3-methylbutanoate (2-oxoisovalerate), the penultimate precursor to L-isoleucine and L-valine, respectively. This chain is Dihydroxy-acid dehydratase, found in Mycobacterium sp. (strain JLS).